The chain runs to 237 residues: GATA zinc finger domain-containing protein 18 (237 aa).

Low complexity-rich tracts occupy residues 1 to 28 and 87 to 118; these read MAHN…KNNN and NTST…PNSN. Disordered regions lie at residues 1 to 31, 78 to 119, and 140 to 186; these read MAHN…NSEY, PTNT…NSNL, and FEEG…GGCS. Positions 140–151 are enriched in acidic residues; that stretch reads FEEGDDEEETSS. Low complexity predominate over residues 152–167; the sequence is DSDSSSSSSTSSSSSE. The GATA-type zinc finger occupies 185 to 212; the sequence is CSICKTQETPYWRKGKDGDKTVYLCNAC.

The sequence is that of GATA zinc finger domain-containing protein 18 (gtaR) from Dictyostelium discoideum (Social amoeba).